A 480-amino-acid chain; its full sequence is 3-isopropylmalate dehydratase large subunit (480 aa).

[4Fe-4S] cluster is bound by residues cysteine 357, cysteine 417, and cysteine 420. Residues 431–441 (GQRCASTSNRN) are compositionally biased toward polar residues. A disordered region spans residues 431 to 454 (GQRCASTSNRNFEGRQGKGGRTHL).

It belongs to the aconitase/IPM isomerase family. LeuC type 1 subfamily. As to quaternary structure, heterodimer of LeuC and LeuD. [4Fe-4S] cluster is required as a cofactor.

The catalysed reaction is (2R,3S)-3-isopropylmalate = (2S)-2-isopropylmalate. It functions in the pathway amino-acid biosynthesis; L-leucine biosynthesis; L-leucine from 3-methyl-2-oxobutanoate: step 2/4. Catalyzes the isomerization between 2-isopropylmalate and 3-isopropylmalate, via the formation of 2-isopropylmaleate. The sequence is that of 3-isopropylmalate dehydratase large subunit from Mycobacteroides abscessus (strain ATCC 19977 / DSM 44196 / CCUG 20993 / CIP 104536 / JCM 13569 / NCTC 13031 / TMC 1543 / L948) (Mycobacterium abscessus).